A 200-amino-acid chain; its full sequence is ATP-dependent Clp protease proteolytic subunit 1 (200 aa).

S98 functions as the Nucleophile in the catalytic mechanism. Residue H123 is part of the active site.

It belongs to the peptidase S14 family. As to quaternary structure, fourteen ClpP subunits assemble into 2 heptameric rings which stack back to back to give a disk-like structure with a central cavity, resembling the structure of eukaryotic proteasomes.

The protein localises to the cytoplasm. The catalysed reaction is Hydrolysis of proteins to small peptides in the presence of ATP and magnesium. alpha-casein is the usual test substrate. In the absence of ATP, only oligopeptides shorter than five residues are hydrolyzed (such as succinyl-Leu-Tyr-|-NHMec, and Leu-Tyr-Leu-|-Tyr-Trp, in which cleavage of the -Tyr-|-Leu- and -Tyr-|-Trp bonds also occurs).. Functionally, cleaves peptides in various proteins in a process that requires ATP hydrolysis. Has a chymotrypsin-like activity. Plays a major role in the degradation of misfolded proteins. In Mycobacterium leprae (strain TN), this protein is ATP-dependent Clp protease proteolytic subunit 1.